The primary structure comprises 468 residues: Mitochondrial dynamics protein MID51 (468 aa).

The Mitochondrial intermembrane portion of the chain corresponds to 1–29 (MAGVNGDRKGKKDDNGLGTAIDFVLSNAK). A helical membrane pass occupies residues 30-47 (LVLGVGGAAMLGIATLAV). Residues 48 to 468 (KRMYDRALSA…SDPESLLRTV (421 aa)) lie on the Cytoplasmic side of the membrane. The tract at residues 50 to 196 (MYDRALSAPS…LSGSLYDDLQ (147 aa)) is dimerization. A disordered region spans residues 56–123 (SAPSSPTKAD…RGLARGGRPA (68 aa)). Residues 91–108 (QNVSRSLQTLPTSSSSFK) show a composition bias toward polar residues. The important for interaction with DNM1L stretch occupies residues 161-170 (AALDICAELR). ADP-binding residues include serine 188, serine 190, and histidine 202. The interval 235–244 (RRENLEYFPR) is important for interaction with DNM1L. Residues serine 344, arginine 346, and lysine 372 each coordinate ADP.

It belongs to the MID49/MID51 family. As to quaternary structure, homodimer.

It localises to the mitochondrion outer membrane. Functionally, mitochondrial outer membrane protein which regulates mitochondrial fission/fusion dynamics. Promotes the recruitment and association of the fission mediator dynamin-related protein 1 (DNM1L) to the mitochondrial surface independently of the mitochondrial fission FIS1 and MFF proteins. Regulates DNM1L GTPase activity and DNM1L oligomerization. The polypeptide is Mitochondrial dynamics protein MID51 (mief1) (Danio rerio (Zebrafish)).